The sequence spans 140 residues: Transcription antitermination protein NusB (140 aa).

This sequence belongs to the NusB family.

Involved in transcription antitermination. Required for transcription of ribosomal RNA (rRNA) genes. Binds specifically to the boxA antiterminator sequence of the ribosomal RNA (rrn) operons. The polypeptide is Transcription antitermination protein NusB (Pseudoalteromonas atlantica (strain T6c / ATCC BAA-1087)).